A 951-amino-acid chain; its full sequence is Valine--tRNA ligase (951 aa).

The short motif at 42–52 is the 'HIGH' region element; it reads PNVTGSLHMGH. A 'KMSKS' region motif is present at residues 554–558; that stretch reads KMSKS. Position 557 (K557) interacts with ATP. Residues 882 to 951 adopt a coiled-coil conformation; the sequence is LIDKDAELAR…EEQKATIAAL (70 aa).

This sequence belongs to the class-I aminoacyl-tRNA synthetase family. ValS type 1 subfamily. Monomer.

It localises to the cytoplasm. It catalyses the reaction tRNA(Val) + L-valine + ATP = L-valyl-tRNA(Val) + AMP + diphosphate. Functionally, catalyzes the attachment of valine to tRNA(Val). As ValRS can inadvertently accommodate and process structurally similar amino acids such as threonine, to avoid such errors, it has a 'posttransfer' editing activity that hydrolyzes mischarged Thr-tRNA(Val) in a tRNA-dependent manner. In Vibrio vulnificus (strain CMCP6), this protein is Valine--tRNA ligase.